We begin with the raw amino-acid sequence, 185 residues long: Elongation factor P (185 aa).

This sequence belongs to the elongation factor P family.

It is found in the cytoplasm. It participates in protein biosynthesis; polypeptide chain elongation. Involved in peptide bond synthesis. Stimulates efficient translation and peptide-bond synthesis on native or reconstituted 70S ribosomes in vitro. Probably functions indirectly by altering the affinity of the ribosome for aminoacyl-tRNA, thus increasing their reactivity as acceptors for peptidyl transferase. This chain is Elongation factor P, found in Gloeothece citriformis (strain PCC 7424) (Cyanothece sp. (strain PCC 7424)).